The following is a 546-amino-acid chain: Protein HydE (546 aa).

The chain is Protein HydE (hydE) from Wolinella succinogenes (strain ATCC 29543 / DSM 1740 / CCUG 13145 / JCM 31913 / LMG 7466 / NCTC 11488 / FDC 602W) (Vibrio succinogenes).